Consider the following 188-residue polypeptide: Heterodisulfide reductase subunit C-like protein (188 aa).

2 consecutive 4Fe-4S ferredoxin-type domains span residues 34 to 64 (KELGAERLMYCMQCGACASICPLARVGFEWY) and 78 to 109 (DELLDDPTPWACVACNRCTEICPRRVSPFEVM). [4Fe-4S] cluster-binding residues include Cys-44, Cys-47, Cys-50, Cys-54, Cys-89, Cys-92, Cys-95, and Cys-99.

This sequence belongs to the HdrC family. As to quaternary structure, the heterodisulfide reductase is composed of three subunits; HdlA, HdlB and HdlC. It forms a complex with the F420-non-reducing hydrogenase (Mvh), which provides the reducing equivalents to the heterodisulfide reductase.

It localises to the cytoplasm. Has oxidoreductase activity. The Hdl and Mvh subunits may together mediate electron transfer from hydrogen to an unidentified electron acceptor on the cytoplasmic side of the membrane. In Archaeoglobus profundus (strain DSM 5631 / JCM 9629 / NBRC 100127 / Av18), this protein is Heterodisulfide reductase subunit C-like protein (hdlC).